The chain runs to 167 residues: CS6 fimbrial subunit B (167 aa).

A signal peptide spans methionine 1–alanine 21.

It localises to the fimbrium. This is CS6 fimbrial subunit B (cssB) from Escherichia coli.